Consider the following 403-residue polypeptide: Acetate kinase (403 aa).

Asparagine 7 is a Mg(2+) binding site. Lysine 14 contributes to the ATP binding site. Arginine 90 contacts substrate. Residue aspartate 147 is the Proton donor/acceptor of the active site. ATP contacts are provided by residues 207-211 (HIGNG), 283-285 (DMR), and 331-335 (GVGEN). Glutamate 386 is a binding site for Mg(2+).

Belongs to the acetokinase family. As to quaternary structure, homodimer. Mg(2+) serves as cofactor. Mn(2+) is required as a cofactor.

Its subcellular location is the cytoplasm. It carries out the reaction acetate + ATP = acetyl phosphate + ADP. It functions in the pathway metabolic intermediate biosynthesis; acetyl-CoA biosynthesis; acetyl-CoA from acetate: step 1/2. Catalyzes the formation of acetyl phosphate from acetate and ATP. Can also catalyze the reverse reaction. Phosphorylates propionate (54%) in addition to acetate (100%). Uses GTP (100%), ITP (163%), UTP (56%), and CTP (21%) as phosphoryl donors in addition to ATP (100%). The polypeptide is Acetate kinase (Thermotoga maritima (strain ATCC 43589 / DSM 3109 / JCM 10099 / NBRC 100826 / MSB8)).